Here is a 121-residue protein sequence, read N- to C-terminus: Large ribosomal subunit protein uL14 (121 aa).

It belongs to the universal ribosomal protein uL14 family. In terms of assembly, part of the 50S ribosomal subunit. Forms a cluster with proteins L3 and L19. In the 70S ribosome, L14 and L19 interact and together make contacts with the 16S rRNA in bridges B5 and B8.

Its function is as follows. Binds to 23S rRNA. Forms part of two intersubunit bridges in the 70S ribosome. This Synechococcus elongatus (strain ATCC 33912 / PCC 7942 / FACHB-805) (Anacystis nidulans R2) protein is Large ribosomal subunit protein uL14.